The primary structure comprises 1076 residues: Nuclear factor of activated T-cells, cytoplasmic 3 (1076 aa).

Residue Thr2 is modified to N-acetylthreonine. Positions 110–115 are calcineurin-binding; sequence PSIQIT. Residues 206 to 307 form a disordered region; the sequence is LGSPLTSPGG…PGHSPRGSVT (102 aa). Repeat copies occupy residues 208–224 and 237–253. Residues 208-309 form a 3 X SP repeats region; sequence SPLTSPGGSP…HSPRGSVTED (102 aa). Over residues 237-254 the composition is skewed to polar residues; sequence SPRQSPCHSPRSSITDEN. The segment covering 257–271 has biased composition (low complexity); that stretch reads SPRPASGPSSRPTSP. Residues 274 to 276 carry the Nuclear localization signal motif; that stretch reads KRR. Repeat 3 spans residues 293–309; that stretch reads SPVPSPGHSPRGSVTED. A Phosphoserine modification is found at Ser345. The segment at 359–390 is disordered; sequence CSDDQGSLSPSRETSVDDGLGSQYPLKKDSSG. Residues 362 to 371 are compositionally biased toward polar residues; it reads DQGSLSPSRE. Ser373 carries the post-translational modification Phosphoserine. Positions 416–597 constitute an RHD domain; it reads SSLPPLDWPL…IPVECSQRSA (182 aa). A DNA-binding region spans residues 445–452; sequence RAHYETEG. Positions 687-689 match the Nuclear localization signal motif; that stretch reads KRK. Disordered regions lie at residues 700–744 and 863–987; these read PVLM…ALSA and GHLL…GGLS. The segment covering 713-722 has biased composition (low complexity); it reads LSSVPSLPVP. 2 stretches are compositionally biased toward polar residues: residues 724 to 734 and 888 to 911; these read SAQTQRPSSDT and SAGQRSLSSPVAAQVTGQPSSHLQ. 2 stretches are compositionally biased toward low complexity: residues 917 to 939 and 946 to 965; these read PSHPGSATAASPAASHALSSSPI and QLQSMPYQSPSSGTASSPSP. Positions 970-981 are enriched in polar residues; that stretch reads HSGQHSTQAQST. The short motif at 1032 to 1041 is the Nuclear export signal element; it reads TLDDVNEIIG. Residues 1049–1076 form a disordered region; the sequence is VSQGPEVIRDAPLPGPESPDVMSSNSAQ. Phosphoserine is present on Ser1066.

NFATC proteins bind to DNA as monomers. Member of the multicomponent NFATC transcription complex that consists of at least two components, a pre-existing cytoplasmic component NFATC2 and an inducible nuclear component NFATC1. Other members such as NFATC4, or members of the activating protein-1 family, MAF, GATA4 and Cbp/p300 can also bind the complex. Component of a promoter-binding complex composed of STAT3, NFATC3 and NFATC4; complex formation is enhanced by calcineurin. Interacts with TRIM17; this interaction prevents NFATC3 nuclear localization. Interacts with and ubiquitinated by STUB1/CHIP; HSPA1A/HSP70 is required as a co-chaperone. In terms of processing, phosphorylated by NFATC-kinase; dephosphorylated by calcineurin. Ubiquitinated by STUB1/CHIP, leading to proteasomal degradation. As to expression, expressed in cardiomyocytes (at protein level).

It is found in the cytoplasm. It localises to the nucleus. Functionally, acts as a regulator of transcriptional activation. Binds to the TNFSF11/RANKL promoter region and promotes TNFSF11 transcription. Binding to the TNFSF11 promoter region is increased by high levels of Ca(2+) which induce NFATC3 expression and may lead to regulation of TNFSF11 expression in osteoblasts. Plays a role in promoting mesenteric arterial wall remodeling in response to the intermittent hypoxia-induced increase in EDN1 and ROCK signaling. As a result NFATC3 colocalizes with F-actin filaments, translocates to the nucleus and promotes transcription of the smooth muscle hypertrophy and differentiation marker ACTA2. Promotes lipopolysaccharide-induced apoptosis and hypertrophy in cardiomyocytes. Following JAK/STAT signaling activation and as part of a complex with NFATC4 and STAT3, binds to the alpha-beta E4 promoter region of CRYAB and activates transcription in cardiomyocytes. In conjunction with NFATC4, involved in embryonic heart development via maintenance of cardiomyocyte survival, proliferation and differentiation. Plays a role in the inducible expression of cytokine genes in T-cells, especially in the induction of the IL-2. Required for thymocyte maturation during DN3 to DN4 transition and during positive selection. Positively regulates macrophage-derived polymicrobial clearance, via binding to the promoter region and promoting transcription of NOS2 resulting in subsequent generation of nitric oxide. Involved in Ca(2+)-mediated transcriptional responses upon Ca(2+) influx via ORAI1 CRAC channels. The polypeptide is Nuclear factor of activated T-cells, cytoplasmic 3 (Rattus norvegicus (Rat)).